Consider the following 859-residue polypeptide: Leucine--tRNA ligase (859 aa).

The short motif at 42–52 (PYPSGRLHMGH) is the 'HIGH' region element. The 'KMSKS' region signature appears at 618-622 (KMSKS). K621 contacts ATP.

This sequence belongs to the class-I aminoacyl-tRNA synthetase family.

The protein resides in the cytoplasm. The catalysed reaction is tRNA(Leu) + L-leucine + ATP = L-leucyl-tRNA(Leu) + AMP + diphosphate. The sequence is that of Leucine--tRNA ligase from Shewanella sp. (strain MR-7).